Here is a 597-residue protein sequence, read N- to C-terminus: Elongation factor 4 (597 aa).

In terms of domain architecture, tr-type G spans 2-184 (DHIRNFSIIA…ALIAKVPPPK (183 aa)). GTP is bound by residues 14–19 (DHGKST) and 131–134 (NKID).

It belongs to the TRAFAC class translation factor GTPase superfamily. Classic translation factor GTPase family. LepA subfamily.

Its subcellular location is the cell inner membrane. It catalyses the reaction GTP + H2O = GDP + phosphate + H(+). Required for accurate and efficient protein synthesis under certain stress conditions. May act as a fidelity factor of the translation reaction, by catalyzing a one-codon backward translocation of tRNAs on improperly translocated ribosomes. Back-translocation proceeds from a post-translocation (POST) complex to a pre-translocation (PRE) complex, thus giving elongation factor G a second chance to translocate the tRNAs correctly. Binds to ribosomes in a GTP-dependent manner. The chain is Elongation factor 4 from Burkholderia vietnamiensis (strain G4 / LMG 22486) (Burkholderia cepacia (strain R1808)).